We begin with the raw amino-acid sequence, 325 residues long: 5-dehydro-2-deoxygluconokinase (325 aa).

It belongs to the carbohydrate kinase PfkB family.

It catalyses the reaction 5-dehydro-2-deoxy-D-gluconate + ATP = 6-phospho-5-dehydro-2-deoxy-D-gluconate + ADP + H(+). The protein operates within polyol metabolism; myo-inositol degradation into acetyl-CoA; acetyl-CoA from myo-inositol: step 5/7. Functionally, catalyzes the phosphorylation of 5-dehydro-2-deoxy-D-gluconate (2-deoxy-5-keto-D-gluconate or DKG) to 6-phospho-5-dehydro-2-deoxy-D-gluconate (DKGP). The polypeptide is 5-dehydro-2-deoxygluconokinase (Listeria monocytogenes serovar 1/2a (strain ATCC BAA-679 / EGD-e)).